A 623-amino-acid polypeptide reads, in one-letter code: uncharacterized protein (623 aa).

The next 5 helical transmembrane spans lie at 242 to 262 (IALALMILALLLGLRKLITWL), 288 to 308 (IVSPVSVFLALFSCDVALDIF), 318 to 338 (VSMWVGAVYIMLLAWLVIALF), 361 to 381 (VINLILKVVYFLIFIVALLGV), and 387 to 407 (FNVSAIIASLGIGGLAVALAV).

It belongs to the MscS (TC 1.A.23) family.

It is found in the cell membrane. This is an uncharacterized protein from Helicobacter pylori (strain J99 / ATCC 700824) (Campylobacter pylori J99).